Consider the following 190-residue polypeptide: Capsid protein (190 aa).

The interval 1-24 is disordered; that stretch reads MSTVGTGKLTRAQRRAAARKNKRN. Residue Ser-2 is modified to N-acetylserine; by host. The segment covering 11–24 has biased composition (basic residues); that stretch reads RAQRRAAARKNKRN.

It belongs to the bromovirus capsid protein family.

It localises to the virion. Its function is as follows. Capsid protein. Probably binds RNA and plays a role in packaging. This is Capsid protein from Cowpea chlorotic mottle virus (CCMV).